A 245-amino-acid chain; its full sequence is Ribonuclease PH (245 aa).

Phosphate contacts are provided by residues Arg86 and 124-126 (GTR).

Belongs to the RNase PH family. Homohexameric ring arranged as a trimer of dimers.

It catalyses the reaction tRNA(n+1) + phosphate = tRNA(n) + a ribonucleoside 5'-diphosphate. In terms of biological role, phosphorolytic 3'-5' exoribonuclease that plays an important role in tRNA 3'-end maturation. Removes nucleotide residues following the 3'-CCA terminus of tRNAs; can also add nucleotides to the ends of RNA molecules by using nucleoside diphosphates as substrates, but this may not be physiologically important. Probably plays a role in initiation of 16S rRNA degradation (leading to ribosome degradation) during starvation. The chain is Ribonuclease PH from Bacillus cytotoxicus (strain DSM 22905 / CIP 110041 / 391-98 / NVH 391-98).